Here is a 220-residue protein sequence, read N- to C-terminus: Octanoyltransferase (220 aa).

The 181-residue stretch at 31 to 211 folds into the BPL/LPL catalytic domain; sequence GTAADHLLLL…HFARIFDFEM (181 aa). Substrate contacts are provided by residues 76–83, 143–145, and 156–158; these read RGGDVTYH, AIG, and GFA. The active-site Acyl-thioester intermediate is Cys-174.

Belongs to the LipB family.

The protein localises to the cytoplasm. It carries out the reaction octanoyl-[ACP] + L-lysyl-[protein] = N(6)-octanoyl-L-lysyl-[protein] + holo-[ACP] + H(+). The protein operates within protein modification; protein lipoylation via endogenous pathway; protein N(6)-(lipoyl)lysine from octanoyl-[acyl-carrier-protein]: step 1/2. Functionally, catalyzes the transfer of endogenously produced octanoic acid from octanoyl-acyl-carrier-protein onto the lipoyl domains of lipoate-dependent enzymes. Lipoyl-ACP can also act as a substrate although octanoyl-ACP is likely to be the physiological substrate. The polypeptide is Octanoyltransferase (Solibacter usitatus (strain Ellin6076)).